Consider the following 296-residue polypeptide: Bifunctional protein FolD 1 (296 aa).

NADP(+)-binding positions include 167–169 and isoleucine 235; that span reads GCG.

This sequence belongs to the tetrahydrofolate dehydrogenase/cyclohydrolase family. In terms of assembly, homodimer.

The catalysed reaction is (6R)-5,10-methylene-5,6,7,8-tetrahydrofolate + NADP(+) = (6R)-5,10-methenyltetrahydrofolate + NADPH. It carries out the reaction (6R)-5,10-methenyltetrahydrofolate + H2O = (6R)-10-formyltetrahydrofolate + H(+). The protein operates within one-carbon metabolism; tetrahydrofolate interconversion. Its function is as follows. Catalyzes the oxidation of 5,10-methylenetetrahydrofolate to 5,10-methenyltetrahydrofolate and then the hydrolysis of 5,10-methenyltetrahydrofolate to 10-formyltetrahydrofolate. The sequence is that of Bifunctional protein FolD 1 from Nocardioides sp. (strain ATCC BAA-499 / JS614).